A 410-amino-acid polypeptide reads, in one-letter code: Thyroid hormone receptor alpha (410 aa).

The segment at 1–32 (MEQKPSKVECGSDPEESSTRSPDGKRKRKNGQ) is disordered. Positions 1–52 (MEQKPSKVECGSDPEESSTRSPDGKRKRKNGQCSLKTSMSGYIPSYLDKDEQ) are modulating. Residues cysteine 53, cysteine 56, cysteine 70, cysteine 73, cysteine 91, cysteine 97, cysteine 107, and cysteine 110 each contribute to the Zn(2+) site. 2 NR C4-type zinc fingers span residues 53–73 (CVVC…CEGC) and 91–115 (CKYD…FKKC). The segment at residues 53 to 127 (CVVCGDKATG…VGMAMDLVLD (75 aa)) is a DNA-binding region (nuclear receptor). The NR LBD domain maps to 163 to 407 (EEWDLIHVAT…PPLFLEVFED (245 aa)). Residues arginine 228 and serine 277 each coordinate 3,3',5-triiodo-L-thyronine.

This sequence belongs to the nuclear hormone receptor family. NR1 subfamily. Binds DNA as a dimer; homodimer and heterodimer with RXRB. Interacts with NCOA3 and NCOA6 coactivators, leading to a strong increase of transcription of target genes. Probably interacts with SFPQ. Interacts with C1D. Interacts with AKAP13. Interacts with TP53INP2. Interacts with PER2. Interacts with TACC1. The interaction with isoform alpha-1, but not alpha-2, is decreased in the presence of thyroid hormone T3.

The protein localises to the nucleus. Its subcellular location is the cytoplasm. Its function is as follows. Nuclear hormone receptor that can act as a repressor or activator of transcription. High affinity receptor for thyroid hormones, including triiodothyronine and thyroxine. The protein is Thyroid hormone receptor alpha (THRA) of Ovis aries (Sheep).